The primary structure comprises 435 residues: Xylose isomerase (435 aa).

Catalysis depends on residues His99 and Asp102. Glu230, Glu266, His269, Asp294, Asp305, Asp307, and Asp337 together coordinate Mg(2+).

It belongs to the xylose isomerase family. Homotetramer. It depends on Mg(2+) as a cofactor.

The protein resides in the cytoplasm. The enzyme catalyses alpha-D-xylose = alpha-D-xylulofuranose. The chain is Xylose isomerase from Enterococcus faecalis (strain ATCC 700802 / V583).